Reading from the N-terminus, the 344-residue chain is Nuclear distribution protein nudE homolog 1 (344 aa).

The tract at residues 1-93 is self-association; that stretch reads MEDSGKTFGS…MQHSEGYRQI (93 aa). Positions 18 to 188 form a coiled coil; that stretch reads WRDLAMTYKQ…ELAVQQKQDK (171 aa). Residues 30-47 show a composition bias toward basic and acidic residues; sequence ENTQEELREFQEGSREYE. A disordered region spans residues 30 to 65; it reads ENTQEELREFQEGSREYEAELETQLQQAETRNRDLL. The interval 88-156 is interaction with PAFAH1B1; the sequence is EGYRQISALE…ERNAFLESEL (69 aa). The interval 167-290 is interaction with CENPF; that stretch reads QRLKDEARDL…QSPSRKSGPA (124 aa). The interval 181–243 is disordered; sequence AVQQKQDKPR…CGLGSPSSGT (63 aa). A compositionally biased stretch (polar residues) spans 208–230; it reads ATGSAPSTPITHQGSSSGLNTPE. At Ser-211 the chain carries Phosphoserine. Residues Thr-215, Thr-228, Thr-243, and Thr-246 each carry the phosphothreonine modification. Cys-274 carries S-palmitoyl cysteine; by ZDHHC2, ZDHHC3 and ZDHHC7 lipidation. A disordered region spans residues 279-337; that stretch reads YDQSPSRKSGPALGRGTKNRDGIDRRPGSTAVGDKGSGKRLEFAKPSSQLSSPALPSTQ. Phosphoserine is present on Ser-282. A compositionally biased stretch (basic and acidic residues) spans 296–305; that stretch reads KNRDGIDRRP. Low complexity predominate over residues 324–335; the sequence is PSSQLSSPALPS.

The protein belongs to the nudE family. In terms of assembly, homodimer. Interacts with CNTRL, LIS1, dynein, SLMAP and TCP1. Interacts with CENPF, dynactin, tubulin gamma, PAFAH1B1, PCM1 and PCNT. Interacts with ZNF365. Interacts with GTP-bound RAB9A and RAB9B; the interaction leads to RAB9-dynein motor tethering. Interacts (via C-terminus) with MCRS1 (via C-terminus); phosphorylation of NDE1 inhibits the interaction. Post-translationally, phosphorylated in mitosis. Phosphorylation at Thr-246 is essential for the G2/M transition. In terms of tissue distribution, expressed in brain, heart, kidney, liver, lung, skeletal muscle, spleen and testis.

It localises to the cytoplasm. It is found in the cytoskeleton. The protein resides in the microtubule organizing center. The protein localises to the centrosome. Its subcellular location is the spindle. It localises to the chromosome. It is found in the centromere. The protein resides in the kinetochore. The protein localises to the cleavage furrow. Its subcellular location is the cytoplasmic vesicle membrane. Functionally, required for centrosome duplication and formation and function of the mitotic spindle. Essential for the development of the cerebral cortex. May regulate the production of neurons by controlling the orientation of the mitotic spindle during division of cortical neuronal progenitors of the proliferative ventricular zone of the brain. Orientation of the division plane perpendicular to the layers of the cortex gives rise to two proliferative neuronal progenitors whereas parallel orientation of the division plane yields one proliferative neuronal progenitor and a postmitotic neuron. A premature shift towards a neuronal fate within the progenitor population may result in an overall reduction in the final number of neurons and an increase in the number of neurons in the deeper layers of the cortex. Acts as a RAB9A/B effector that tethers RAB9-associated late endosomes to the dynein motor for their retrograde transport to the trans-Golgi network. In Rattus norvegicus (Rat), this protein is Nuclear distribution protein nudE homolog 1.